The following is a 212-amino-acid chain: Adenylate kinase (212 aa).

Gly14–Thr19 lines the ATP pocket. The NMP stretch occupies residues Ser34–Val63. AMP contacts are provided by residues Thr35, Arg40, Ser61–Val63, Gly89–Arg92, and Gln96. Positions Gln126 to Asp163 are LID. An ATP-binding site is contributed by Arg127. Positions 130 and 133 each coordinate Zn(2+). Position 136 to 137 (Ser136 to Tyr137) interacts with ATP. Residues Cys150 and Asp153 each coordinate Zn(2+). AMP is bound by residues Arg160 and Arg171. Residue Gln199 coordinates ATP.

It belongs to the adenylate kinase family. In terms of assembly, monomer.

The protein localises to the cytoplasm. The catalysed reaction is AMP + ATP = 2 ADP. Its pathway is purine metabolism; AMP biosynthesis via salvage pathway; AMP from ADP: step 1/1. In terms of biological role, catalyzes the reversible transfer of the terminal phosphate group between ATP and AMP. Plays an important role in cellular energy homeostasis and in adenine nucleotide metabolism. This is Adenylate kinase from Mesomycoplasma hyopneumoniae (strain 232) (Mycoplasma hyopneumoniae).